A 243-amino-acid polypeptide reads, in one-letter code: tRNA (guanine-N(1)-)-methyltransferase (243 aa).

S-adenosyl-L-methionine-binding positions include glycine 108 and leucine 127–leucine 132.

The protein belongs to the RNA methyltransferase TrmD family. Homodimer.

The protein resides in the cytoplasm. The catalysed reaction is guanosine(37) in tRNA + S-adenosyl-L-methionine = N(1)-methylguanosine(37) in tRNA + S-adenosyl-L-homocysteine + H(+). In terms of biological role, specifically methylates guanosine-37 in various tRNAs. This chain is tRNA (guanine-N(1)-)-methyltransferase, found in Streptococcus gordonii (strain Challis / ATCC 35105 / BCRC 15272 / CH1 / DL1 / V288).